Reading from the N-terminus, the 1129-residue chain is DNA-directed RNA polymerase I subunit RPA2 (1129 aa).

Residues Cys1061–Cys1093 form a C4-type zinc finger.

Belongs to the RNA polymerase beta chain family. In terms of assembly, component of the RNA polymerase I (Pol I) complex consisting of at least 13 subunits.

It is found in the nucleus. The protein localises to the nucleolus. The enzyme catalyses RNA(n) + a ribonucleoside 5'-triphosphate = RNA(n+1) + diphosphate. In terms of biological role, DNA-dependent RNA polymerase catalyzes the transcription of DNA into RNA using the four ribonucleoside triphosphates as substrates. Second largest core component of RNA polymerase I which synthesizes ribosomal RNA precursors. Proposed to contribute to the polymerase catalytic activity and forms the polymerase active center together with the largest subunit. Pol I is composed of mobile elements and RPA2 is part of the core element with the central large cleft and probably a clamp element that moves to open and close the cleft. The chain is DNA-directed RNA polymerase I subunit RPA2 from Drosophila melanogaster (Fruit fly).